The chain runs to 414 residues: MVVMGNGPLKGTVATSGAKNAALPILFSTLLAEGNHVFTNMPKLKDIESTSELLNSLGCETKWVGDEFHVTVNKPSSFEASYDLVRKMRASFLCMGPMLAKYGEAVVSQPGGCAIGSRPIDLHLDGFRALGATITQKEGYVHAGSPKLKGGTFLFETVTVGGTENVMMAATLADGVTVLENAAKEPEIVDLAEYLNKMGAKITGHGTSVIRIEGVAKLTPAKHSIMPDRIEAGTLLIAGAITKGQVTVTKCVPAHLEALILKMREAGFKIETTKDTMTVFPCDQWEAVDITTAPHPLFPTDLQAQFMALMTVAHGTSVITETVFENRFMHVTELSRLGADITPKTRVAVVRGCPGKLTGAPVMATDLRASASLVLAGLVASGETVVSRIYHLDRGYEKLEDKLSSLGAKIRRIE.

19–20 (KN) is a phosphoenolpyruvate binding site. R89 serves as a coordination point for UDP-N-acetyl-alpha-D-glucosamine. C113 (proton donor) is an active-site residue. A 2-(S-cysteinyl)pyruvic acid O-phosphothioketal modification is found at C113. UDP-N-acetyl-alpha-D-glucosamine contacts are provided by residues 118–122 (RPIDL), D301, and V323.

This sequence belongs to the EPSP synthase family. MurA subfamily.

It is found in the cytoplasm. The enzyme catalyses phosphoenolpyruvate + UDP-N-acetyl-alpha-D-glucosamine = UDP-N-acetyl-3-O-(1-carboxyvinyl)-alpha-D-glucosamine + phosphate. It functions in the pathway cell wall biogenesis; peptidoglycan biosynthesis. In terms of biological role, cell wall formation. Adds enolpyruvyl to UDP-N-acetylglucosamine. The protein is UDP-N-acetylglucosamine 1-carboxyvinyltransferase of Bdellovibrio bacteriovorus (strain ATCC 15356 / DSM 50701 / NCIMB 9529 / HD100).